The following is a 579-amino-acid chain: Glypican-2 (579 aa).

The signal sequence occupies residues 1-23; it reads MSALRPLLLLLLPLCPGPGPGPG. O-linked (Xyl...) (heparan sulfate) serine glycosylation is found at Ser55, Ser92, and Ser155. 2 disordered regions span residues 444–468 and 485–555; these read GGSPAEQVNNPELKVDASGPDVPTR and ALGH…RSGG. O-linked (Xyl...) (heparan sulfate) serine glycosylation is found at Ser500 and Ser502. Pro residues predominate over residues 520–529; the sequence is PARPPRPPYP. Gly554 is lipidated: GPI-anchor amidated glycine. A propeptide spans 555 to 579 (removed in mature form); the sequence is GASIGFHTQTILILSLSALALLGPR.

This sequence belongs to the glypican family. As to quaternary structure, interacts (via heparan sulfate) with PTN; this interaction promotes neurite outgrowth through binding of PTN with chondroitin sulfate of proteoglycans, thereby releasing PTPRS of chondroitin sulfate proteoglycans (CSPGs) and leading to binding with heparan sulfate of GPC2. Interacts (heparan sulfate chain) with MDK; this interaction is inhibited by heparin followed by chondroitin sulfate E; this interaction induces GPC2 clustering through heparan sulfate chain; this interaction induces neuronal cell adhesion and neurite outgrowth.

It localises to the cell membrane. Its subcellular location is the secreted. It is found in the extracellular space. In terms of biological role, cell surface proteoglycan that bears heparan sulfate. May fulfill a function related to the motile behaviors of developing neurons. The chain is Glypican-2 (GPC2) from Homo sapiens (Human).